A 577-amino-acid polypeptide reads, in one-letter code: 5'-AMP-activated protein kinase subunit gamma (577 aa).

A disordered region spans residues 45–226; the sequence is QSEGVGGGEL…NNNNSNSNNN (182 aa). The span at 58–88 shows a compositional bias: low complexity; that stretch reads NNNTTNNNTPTNTTTTTNTNTTTMNNSNNNN. Composition is skewed to polar residues over residues 106–121 and 138–155; these read SIEQ…SQDG and ESQS…NNNM. Residues 165-226 show a composition bias toward low complexity; it reads STDNKSSTNT…NNNNSNSNNN (62 aa). 4 consecutive CBS domains span residues 279 to 341, 364 to 426, 438 to 499, and 517 to 574; these read VIPI…KKPK, ERPS…QLPE, IGTF…LSPS, and QRPE…DVKS.

It belongs to the 5'-AMP-activated protein kinase gamma subunit family.

In terms of biological role, AMPK may be responsible for the regulation of fatty acid synthesis by phosphorylation of acetyl-CoA carboxylase. In Dictyostelium discoideum (Social amoeba), this protein is 5'-AMP-activated protein kinase subunit gamma (prkag).